The following is a 177-amino-acid chain: NADH-quinone oxidoreductase subunit B (177 aa).

[4Fe-4S] cluster is bound by residues Cys56, Cys57, Cys121, and Cys151.

Belongs to the complex I 20 kDa subunit family. As to quaternary structure, NDH-1 is composed of 14 different subunits. Subunits NuoB, C, D, E, F, and G constitute the peripheral sector of the complex. Requires [4Fe-4S] cluster as cofactor.

It is found in the cell inner membrane. It carries out the reaction a quinone + NADH + 5 H(+)(in) = a quinol + NAD(+) + 4 H(+)(out). Its function is as follows. NDH-1 shuttles electrons from NADH, via FMN and iron-sulfur (Fe-S) centers, to quinones in the respiratory chain. Couples the redox reaction to proton translocation (for every two electrons transferred, four hydrogen ions are translocated across the cytoplasmic membrane), and thus conserves the redox energy in a proton gradient. The protein is NADH-quinone oxidoreductase subunit B of Jannaschia sp. (strain CCS1).